The chain runs to 446 residues: Phosphoglucosamine mutase (446 aa).

Residue serine 103 is the Phosphoserine intermediate of the active site. Residues serine 103, aspartate 242, aspartate 244, and aspartate 246 each coordinate Mg(2+). Serine 103 is subject to Phosphoserine.

It belongs to the phosphohexose mutase family. It depends on Mg(2+) as a cofactor. Activated by phosphorylation.

It catalyses the reaction alpha-D-glucosamine 1-phosphate = D-glucosamine 6-phosphate. Functionally, catalyzes the conversion of glucosamine-6-phosphate to glucosamine-1-phosphate. In Corynebacterium urealyticum (strain ATCC 43042 / DSM 7109), this protein is Phosphoglucosamine mutase.